Consider the following 487-residue polypeptide: Siroheme synthase (487 aa).

A precorrin-2 dehydrogenase /sirohydrochlorin ferrochelatase region spans residues methionine 1–leucine 203. NAD(+) is bound by residues glutamate 22 to valine 23 and proline 43 to glutamine 44. Phosphoserine is present on serine 128. Residues glycine 229–leucine 487 form a uroporphyrinogen-III C-methyltransferase region. Proline 238 is a binding site for S-adenosyl-L-methionine. Catalysis depends on aspartate 261, which acts as the Proton acceptor. The Proton donor role is filled by lysine 283. Residues glycine 314 to aspartate 316, valine 319, threonine 344 to alanine 345, methionine 396, and alanine 425 contribute to the S-adenosyl-L-methionine site.

The protein in the N-terminal section; belongs to the precorrin-2 dehydrogenase / sirohydrochlorin ferrochelatase family. In the C-terminal section; belongs to the precorrin methyltransferase family.

The catalysed reaction is uroporphyrinogen III + 2 S-adenosyl-L-methionine = precorrin-2 + 2 S-adenosyl-L-homocysteine + H(+). It catalyses the reaction precorrin-2 + NAD(+) = sirohydrochlorin + NADH + 2 H(+). It carries out the reaction siroheme + 2 H(+) = sirohydrochlorin + Fe(2+). Its pathway is cofactor biosynthesis; adenosylcobalamin biosynthesis; precorrin-2 from uroporphyrinogen III: step 1/1. It functions in the pathway cofactor biosynthesis; adenosylcobalamin biosynthesis; sirohydrochlorin from precorrin-2: step 1/1. It participates in porphyrin-containing compound metabolism; siroheme biosynthesis; precorrin-2 from uroporphyrinogen III: step 1/1. The protein operates within porphyrin-containing compound metabolism; siroheme biosynthesis; siroheme from sirohydrochlorin: step 1/1. Its pathway is porphyrin-containing compound metabolism; siroheme biosynthesis; sirohydrochlorin from precorrin-2: step 1/1. Functionally, multifunctional enzyme that catalyzes the SAM-dependent methylations of uroporphyrinogen III at position C-2 and C-7 to form precorrin-2 via precorrin-1. Then it catalyzes the NAD-dependent ring dehydrogenation of precorrin-2 to yield sirohydrochlorin. Finally, it catalyzes the ferrochelation of sirohydrochlorin to yield siroheme. The protein is Siroheme synthase of Psychrobacter sp. (strain PRwf-1).